The primary structure comprises 172 residues: Translationally-controlled tumor protein (172 aa).

In terms of domain architecture, TCTP spans 1-172 (MIIYRDLISH…FKDGLEMEKC (172 aa)). A Phosphoserine; by PLK1 modification is found at Ser-46. Ser-53 is modified (phosphoserine). Ser-64 carries the post-translational modification Phosphoserine; by PLK1. Residues 70 to 172 (VDIVMNHHLQ…FKDGLEMEKC (103 aa)) form a required for reduction of TSC22D1 protein stability region.

The protein belongs to the TCTP family. In terms of assembly, homodimer. Interacts with STEAP3. Interacts with TSC22D1; interaction results in the destabilization of TSC22D1 protein.

It is found in the cytoplasm. Functionally, involved in calcium binding and microtubule stabilization. Acts as a negative regulator of TSC22D1-mediated apoptosis, via interaction with and destabilization of TSC22D1 protein. The polypeptide is Translationally-controlled tumor protein (TPT1) (Bos taurus (Bovine)).